We begin with the raw amino-acid sequence, 408 residues long: tRNA-specific 2-thiouridylase MnmA (408 aa).

ATP-binding positions include 27–34 and Leu-53; that span reads AMSGGVDS. Cys-121 serves as the catalytic Nucleophile. A disulfide bridge links Cys-121 with Cys-222. Gly-145 lines the ATP pocket. The interval 172 to 174 is interaction with tRNA; that stretch reads RDQ. The active-site Cysteine persulfide intermediate is Cys-222.

It belongs to the MnmA/TRMU family.

Its subcellular location is the cytoplasm. The enzyme catalyses S-sulfanyl-L-cysteinyl-[protein] + uridine(34) in tRNA + AH2 + ATP = 2-thiouridine(34) in tRNA + L-cysteinyl-[protein] + A + AMP + diphosphate + H(+). In terms of biological role, catalyzes the 2-thiolation of uridine at the wobble position (U34) of tRNA, leading to the formation of s(2)U34. This chain is tRNA-specific 2-thiouridylase MnmA, found in Rhizobium etli (strain CIAT 652).